A 1007-amino-acid chain; its full sequence is Serine/threonine-protein kinase PRP4 homolog (1007 aa).

Over residues 1-10 (MAAAETQSLR) the composition is skewed to polar residues. The segment at 1-99 (MAAAETQSLR…EGMSPAKRTK (99 aa)) is disordered. A2 carries the N-acetylalanine modification. Phosphoserine occurs at positions 8, 20, 23, and 32. Basic residues-rich tracts occupy residues 39–59 (KHSR…KHKH) and 67–81 (KKHK…HKRK). Residues 82–91 (EVIDASDKEG) are compositionally biased toward basic and acidic residues. Phosphoserine occurs at positions 87 and 93. Residue K99 is modified to N6-acetyllysine; alternate. K99 participates in a covalent cross-link: Glycyl lysine isopeptide (Lys-Gly) (interchain with G-Cter in SUMO2); alternate. K111 participates in a covalent cross-link: Glycyl lysine isopeptide (Lys-Gly) (interchain with G-Cter in SUMO2). K117 participates in a covalent cross-link: Glycyl lysine isopeptide (Lys-Gly) (interchain with G-Cter in SUMO2); alternate. K117 is covalently cross-linked (Glycyl lysine isopeptide (Lys-Gly) (interchain with G-Cter in SUMO1); alternate). S131 carries the phosphoserine modification. Y140 bears the Phosphotyrosine mark. Disordered stretches follow at residues 140–533 (YESG…EEED) and 559–583 (SNMS…SPDD). 3 positions are modified to phosphoserine: S142, S144, and S166. The span at 157–168 (GNRSSTRSSSTK) shows a compositional bias: low complexity. Glycyl lysine isopeptide (Lys-Gly) (interchain with G-Cter in SUMO2) cross-links involve residues K170 and K177. Composition is skewed to basic residues over residues 179–202 (TTKK…KKSK) and 214–230 (RSKS…SKRS). Residues S239, S241, S257, S277, S283, S292, and S294 each carry the phosphoserine modification. Residues 247–270 (RSQEKIGKARSPTDDKVKIEDKSK) are compositionally biased toward basic and acidic residues. The segment covering 302 to 315 (SKDRRSRSKERKSK) has biased composition (basic residues). Residues 316 to 325 (RSETDKEKKP) show a composition bias toward basic and acidic residues. Residues S328, S354, S356, S366, and S368 each carry the phosphoserine modification. Residues 342-367 (PSRRPGRSPKRRSLSPKPRDKSRRSR) are compositionally biased toward basic residues. T385 bears the Phosphothreonine mark. The residue at position 387 (S387) is a Phosphoserine. 2 stretches are compositionally biased toward basic and acidic residues: residues 395–408 (RSLE…ERRR) and 415–429 (RPRD…RSKD). 3 positions are modified to phosphoserine: S427, S431, and S437. A compositionally biased stretch (basic residues) spans 438 to 497 (PTRRRSRSPIRRRSRSPLRRSRSPRRRSRSPRRRDRGRRSRSRLRRRSRSRGGRRRRSRS). Residues S518, S519, S520, S565, S569, S578, and S580 each carry the phosphoserine modification. Residues 518-533 (SSSDDNLEDFDVEEED) show a composition bias toward acidic residues. A compositionally biased stretch (low complexity) spans 562–581 (SVPSEPSSPQSSTRTRSPSP). Glycyl lysine isopeptide (Lys-Gly) (interchain with G-Cter in SUMO2) cross-links involve residues K593 and K659. The region spanning 687–1003 (YNVYGYTGQG…INQALQHAFI (317 aa)) is the Protein kinase domain. ATP is bound by residues 693–701 (TGQGVFSNV) and K717. K717 carries the N6-acetyllysine modification. Residue D815 is the Proton acceptor of the active site. A Phosphotyrosine modification is found at Y849. A Phosphoserine modification is found at S852.

The protein belongs to the protein kinase superfamily. CMGC Ser/Thr protein kinase family. Interacts with CLK1 C-terminus. Associates with the U5 snRNP and NCOR1 deacetylase complexes. Identified in the spliceosome C complex. In terms of processing, phosphorylated by CLK1. Autophosphorylated; phosphorylation inhibits interaction with its targets, such as PRPF6 or SMARCA4.

Its subcellular location is the nucleus. The protein localises to the chromosome. It is found in the centromere. The protein resides in the kinetochore. The catalysed reaction is L-seryl-[protein] + ATP = O-phospho-L-seryl-[protein] + ADP + H(+). The enzyme catalyses L-threonyl-[protein] + ATP = O-phospho-L-threonyl-[protein] + ADP + H(+). Serine/threonine kinase involved in spliceosomal assembly as well as mitosis and signaling regulation. Connects chromatin mediated regulation of transcription and pre-mRNA splicing. During spliceosomal assembly, interacts with and phosphorylates PRPF6 and PRPF31, components of the U4/U6-U5 tri-small nuclear ribonucleoprotein (snRNP), to facilitate the formation of the spliceosome B complex. Plays a role in regulating transcription and the spindle assembly checkpoint (SAC). Associates with U5 snRNP and NCOR1 deacetylase complexes which may allow a coordination of pre-mRNA splicing with chromatin remodeling events involved in transcriptional regulation. Associates and probably phosphorylates SMARCA4 and NCOR1. Phosphorylates SRSF1. Associates with kinetochores during mitosis and is necessary for recruitment and maintenance of the checkpoint proteins such as MAD1L1 and MAD12L1 at the kinetochores. Phosphorylates and regulates the activity of the transcription factors such as ELK1 and KLF13. Phosphorylates nuclear YAP1 and WWTR1/TAZ which induces nuclear exclusion and regulates Hippo signaling pathway, involved in tissue growth control. In Pongo abelii (Sumatran orangutan), this protein is Serine/threonine-protein kinase PRP4 homolog (PRP4K).